A 460-amino-acid polypeptide reads, in one-letter code: Cysteine--tRNA ligase (460 aa).

A Zn(2+)-binding site is contributed by Cys-29. The short motif at 31 to 41 (ATPQSSPHIGH) is the 'HIGH' region element. Positions 212, 237, and 241 each coordinate Zn(2+). The 'KMSKS' region signature appears at 268-272 (KMSKS). Lys-271 contributes to the ATP binding site.

It belongs to the class-I aminoacyl-tRNA synthetase family. In terms of assembly, monomer. The cofactor is Zn(2+).

Its subcellular location is the cytoplasm. The enzyme catalyses tRNA(Cys) + L-cysteine + ATP = L-cysteinyl-tRNA(Cys) + AMP + diphosphate. In Corynebacterium glutamicum (strain R), this protein is Cysteine--tRNA ligase.